We begin with the raw amino-acid sequence, 435 residues long: Hydrogenobyrinate a,c-diamide synthase (435 aa).

Residues 239–422 (RIGVARDASF…IHFYLPSNPQ (184 aa)) form the GATase cobBQ-type domain. Catalysis depends on C321, which acts as the Nucleophile.

It belongs to the CobB/CbiA family. Mg(2+) is required as a cofactor.

The enzyme catalyses hydrogenobyrinate + 2 L-glutamine + 2 ATP + 2 H2O = hydrogenobyrinate a,c-diamide + 2 L-glutamate + 2 ADP + 2 phosphate + 2 H(+). The protein operates within cofactor biosynthesis; adenosylcobalamin biosynthesis; cob(II)yrinate a,c-diamide from precorrin-2 (aerobic route): step 9/10. In terms of biological role, catalyzes the ATP-dependent amidation of the two carboxylate groups at positions a and c of hydrogenobyrinate, using either L-glutamine or ammonia as the nitrogen source. The protein is Hydrogenobyrinate a,c-diamide synthase of Pseudomonas aeruginosa (strain ATCC 15692 / DSM 22644 / CIP 104116 / JCM 14847 / LMG 12228 / 1C / PRS 101 / PAO1).